The sequence spans 294 residues: Probable WRKY transcription factor 70 (294 aa).

A disordered region spans residues 72-94; it reads SQNASCDNDGKFEDSGDSRKRLG. The span at 79–91 shows a compositional bias: basic and acidic residues; it reads NDGKFEDSGDSRK. The Nuclear localization signal motif lies at 90–97; that stretch reads RKRLGPVK. Positions 114–182 form a DNA-binding region, WRKY; sequence IESTILEDAF…YIGNHTCNTN (69 aa). Residues 201–229 are disordered; that stretch reads SEDHKSPSLSTSMKEEDNPHRHHGSSTEN.

It belongs to the WRKY group III family. In terms of assembly, interacts with WRKY30. Binds to BZR2/BES1 to cooperatively regulate the expression of target genes. Binds to unmodified (i.e. not sumoylated) NPR1. In terms of processing, phosphorylated and destabilized by ASK7/BIN2. In terms of tissue distribution, expressed in leaves and flowers.

The protein resides in the nucleus. Functionally, transcription factor involved in senescence, biotic and abiotic stress responses by modulating various phytohormones signaling pathways. Interacts specifically with the W box (5'-(T)TGAC[CT]-3'), a frequently occurring elicitor-responsive cis-acting element. Binds to the 5'-[CT]GACTTTT-3' motif in promoters of target genes to induce their expression. Binding to the W-box element of PR-1 promoter is mediated by not-sumoylated NPR1 in the absence of salicylic acid. Plays an important but not indispensable role in jasmonate and salicylic acid signaling. Positively regulates the salicylic acid (SA)-mediated signal pathway, but negatively the jasmonic acid (JA)-mediated signal pathway, thus determining the balance between these mutually antagonistic pathways. Together with WRKY46, WRKY53 and WRKY54, prevents defense response to the necrotrophic pathogens P.carotovorum and B.cinerea, but promotes defense responses (including SA-induced pathogenesis-related (PR) genes expression) against biotrophic/hemibiotrophic SA-monitored pathogens (e.g. P.syringae, E.carotovora subsp. carotovora SCC3193 and E.cichoracearum), probably by regulating negatively the JA/ET and positively the SA signaling pathways. Contributes to the suppression of jasmonic acid (MeJA)-induced expression of JA-responsive genes (e.g. PDF1.2). Promotes susceptibility to JA-monitored pathogens (e.g. A.brassicicola), probably by facilitating SA-controlled suppression of JA-mediated defense. Represses the biosynthesis of the phytoalexin camalexin and indol-3-ylmethyl glucosinolate (IGS). Represses both SA and JA/ethylene (ET) mediated defense marker genes expression. Negative regulator of SA biosynthesis. Negative regulator of EDS1-dependent defense against E.amylovora. Required for RPP4-mediated disease resistance and basal defense against H.parasitica, probably via late up-regulation (LURP) of resistance genes (e.g. CML10/CaBP22 and LURP1). Probably involved in defense responses toward insects (e.g. P.xylostella and B.brassicae). Together with WRKY54, negative regulator of developmental senescence, probably via the regulation of several senescence-associated markers genes. Together with WRKY46 and WRKY54, promotes brassinosteroid (BR)-regulated plant growth but prevent drought response by modulating gene expression. In collaboration with WRKY54, prevents stomatal closure and, consequently, osmotic stress tolerance. Regulates rhizobacterium B.cereus AR156-induced systemic resistance (ISR) to P.syringae pv. tomato DC3000. This Arabidopsis thaliana (Mouse-ear cress) protein is Probable WRKY transcription factor 70.